Here is a 651-residue protein sequence, read N- to C-terminus: Acetyl-coenzyme A synthetase (651 aa).

CoA contacts are provided by residues 190-193 (RRGK) and Thr311. ATP is bound by residues 387-389 (GEP), 411-416 (DTWWQT), Asp508, and Arg523. Ser531 serves as a coordination point for CoA. ATP is bound at residue Arg534. Positions 545, 547, and 550 each coordinate Mg(2+). Lys617 is subject to N6-acetyllysine.

Belongs to the ATP-dependent AMP-binding enzyme family. The cofactor is Mg(2+). Acetylated. Deacetylation by the SIR2-homolog deacetylase activates the enzyme.

The enzyme catalyses acetate + ATP + CoA = acetyl-CoA + AMP + diphosphate. Its function is as follows. Catalyzes the conversion of acetate into acetyl-CoA (AcCoA), an essential intermediate at the junction of anabolic and catabolic pathways. AcsA undergoes a two-step reaction. In the first half reaction, AcsA combines acetate with ATP to form acetyl-adenylate (AcAMP) intermediate. In the second half reaction, it can then transfer the acetyl group from AcAMP to the sulfhydryl group of CoA, forming the product AcCoA. M.tuberculosis may use AcsA for both acetate and propionate assimilation. In Mycobacterium tuberculosis (strain CDC 1551 / Oshkosh), this protein is Acetyl-coenzyme A synthetase.